Here is a 720-residue protein sequence, read N- to C-terminus: Glutaryl-7-aminocephalosporanic-acid acylase (720 aa).

Positions 1-29 are cleaved as a signal peptide; that stretch reads MLRVLHRAASALVMATVIGLAPAVAFALA. A propeptide spans 190-198 (spacer peptide); the sequence is DPPDLADQG. Ser-199 acts as the Nucleophile in catalysis. Catalysis depends on residues His-221 and Glu-653.

Belongs to the peptidase S45 family. Heterotetramer of two alpha and two beta subunits processed from the same precursor.

The protein localises to the periplasm. The catalysed reaction is (7R)-7-(4-carboxybutanamido)cephalosporanate + H2O = (7R)-7-aminocephalosporanate + glutarate. Catalyzes the deacylation of 7 beta-(4-carboxybutanamido)cephalosporanic acid (glutaryl-7-aminocephalosporanic acid or GL-7-ACA) to 7-aminocephalosporanic acid (7-ACA). This chain is Glutaryl-7-aminocephalosporanic-acid acylase, found in Pseudomonas sp. (strain SY-77).